Consider the following 185-residue polypeptide: MVKIKMPALFRRRSGSKSPPLPQADPASGGGSPAPTPEEEMERVFRKFDANGDGRISRSELGALFESLGHAATDDELARMMAEADADGDGFISLDEFAALNATASGDAAAVEEDLRHAFRVFDADGNGTISAAELARVLHGLGEKATVQQCRRMIEGVDQNGDGLISFEEFKVMMAGGGSFAKIA.

The segment at 1 to 41 (MVKIKMPALFRRRSGSKSPPLPQADPASGGGSPAPTPEEEM) is disordered. EF-hand domains are found at residues 36–71 (TPEE…LGHA), 72–107 (ATDD…ASGD), 110–145 (AVEE…LGEK), and 146–181 (ATVQ…GGSF). Ca(2+) contacts are provided by Asp-49, Asn-51, Asp-53, Arg-55, Glu-60, Asp-85, Asp-87, Asp-89, Glu-96, Asp-123, Asp-125, Asn-127, Thr-129, Glu-134, Asp-159, Asn-161, Asp-163, and Glu-170.

Its function is as follows. Potential calcium sensor. This chain is Probable calcium-binding protein CML10 (CML10), found in Oryza sativa subsp. japonica (Rice).